The sequence spans 577 residues: DEAD-box ATP-dependent RNA helicase 22 (577 aa).

The short motif at 82–110 is the Q motif element; sequence TSWESLGVSDRLASALHGAGLARPSLVQA. One can recognise a Helicase ATP-binding domain in the interval 113–375; that stretch reads IPHVLTTNDV…GGVLKRMFPN (263 aa). 126–133 is a binding site for ATP; it reads AETGSGKT. A DEAD box motif is present at residues 249–252; the sequence is DEAD. The disordered stretch occupies residues 288-317; sequence SLGDTNEYREDSDSQSAELSADDEENEDGL. Positions 407 to 568 constitute a Helicase C-terminal domain; that stretch reads LLDAVKYGLK…SFRNKLKKQA (162 aa).

It belongs to the DEAD box helicase family.

It catalyses the reaction ATP + H2O = ADP + phosphate + H(+). The polypeptide is DEAD-box ATP-dependent RNA helicase 22 (Oryza sativa subsp. japonica (Rice)).